The chain runs to 633 residues: MTNWSSKDSLKVYNVPYWGAGFFNINDAGHVTVAPDKSRPDAQIVLSDAIEQLRQSGLTTPVLLRFPDILKSRVDALFNAFGQAIEKSGYEGDYLCVYPIKVNQQRRVIETISQSYSDKPRLGLEAGSKPELLAVLSHHHEQGSVIVCNGYKDREYIRHALLGNLMGHKVYIVVEKPSELEMVLDESARLNIKPNIGVRAKLASTGSGMWESSGGSMSKFGLSASQILALIERLRGLGKLDCLQLLHFHLGSQIANIRDIQGGIRECGRFYAELRRLGANIEVVDVGGGLGVDYEGTRSQSHCSANYSLSEYANNVVWGIGDVCREFDLPHPTIISESGRALTAHHAVLVTNIIGAEGVEMNDISAPDDDAPTILQNMWKGWLDLRSEDPSLLEIFHDSVADLGDVNTQYTMGLLNLEQRAWAEMLHQNTCLALKELLNPVNRNHRALADELSEKLADKCFANFSLFQSLPDAWGIGQVFPVMPLAGLERPLTRRGILMDITCDSDGQVEHYVDGLGVESTLPMPVYGEHEECHVGFFLVGAYQEILGDLHNLFGDTHCAEVWLDDEGKMDIRNVVRGDTVDQLLRYVNIDPSVIRENYQRIVSHPALDDATRKALLDELELGLQGYAYLEDE.

An N6-(pyridoxal phosphate)lysine modification is found at Lys101. Substrate is bound at residue 284-294 (VDVGGGLGVDY).

It belongs to the Orn/Lys/Arg decarboxylase class-II family. SpeA subfamily. It depends on Mg(2+) as a cofactor. The cofactor is pyridoxal 5'-phosphate.

It carries out the reaction L-arginine + H(+) = agmatine + CO2. It participates in amine and polyamine biosynthesis; agmatine biosynthesis; agmatine from L-arginine: step 1/1. Functionally, catalyzes the biosynthesis of agmatine from arginine. The chain is Biosynthetic arginine decarboxylase from Aeromonas hydrophila subsp. hydrophila (strain ATCC 7966 / DSM 30187 / BCRC 13018 / CCUG 14551 / JCM 1027 / KCTC 2358 / NCIMB 9240 / NCTC 8049).